An 801-amino-acid polypeptide reads, in one-letter code: Phenylalanine--tRNA ligase beta subunit (801 aa).

Residues 39–153 (AEGLSKLVVG…EDAVPGESIF (115 aa)) form the tRNA-binding domain. The 76-residue stretch at 406–481 (TDDIQVSTSL…RIYGYDKLPT (76 aa)) folds into the B5 domain. Mg(2+) contacts are provided by aspartate 459, aspartate 465, glutamate 468, and glutamate 469. The FDX-ACB domain maps to 708–801 (TKFPAVSRDI…LTEKVGAEVR (94 aa)).

This sequence belongs to the phenylalanyl-tRNA synthetase beta subunit family. Type 1 subfamily. Tetramer of two alpha and two beta subunits. Mg(2+) serves as cofactor.

It localises to the cytoplasm. The catalysed reaction is tRNA(Phe) + L-phenylalanine + ATP = L-phenylalanyl-tRNA(Phe) + AMP + diphosphate + H(+). The protein is Phenylalanine--tRNA ligase beta subunit of Streptococcus mutans serotype c (strain ATCC 700610 / UA159).